The sequence spans 149 residues: Cytochrome c' (149 aa).

An N-terminal signal peptide occupies residues 1-19; it reads MRRVLLATLMAALPAAAMA. Residues R29, T89, A90, C138, C141, and H142 each contribute to the heme c site.

As to quaternary structure, monomer and homodimer. Binds 1 heme c group covalently per subunit.

Its function is as follows. Cytochrome c' is the most widely occurring bacterial c-type cytochrome. Cytochromes c' are high-spin proteins and the heme has no sixth ligand. Their exact function is not known. In Cereibacter sphaeroides (strain ATCC 17023 / DSM 158 / JCM 6121 / CCUG 31486 / LMG 2827 / NBRC 12203 / NCIMB 8253 / ATH 2.4.1.) (Rhodobacter sphaeroides), this protein is Cytochrome c' (cycP).